Reading from the N-terminus, the 373-residue chain is 3 beta-hydroxysteroid dehydrogenase/Delta 5--&gt;4-isomerase type 1 (373 aa).

NADP(+) contacts are provided by residues 10-15 (GAGGFV), tyrosine 155, and lysine 159. Lysine 159 serves as the catalytic Proton donor. Residues 288–308 (LPLLYWLAFLLETVSFLLRPF) traverse the membrane as a helical segment.

It belongs to the 3-beta-HSD family. In terms of tissue distribution, adrenal glands, kidney, testes and ovaries.

It localises to the endoplasmic reticulum membrane. The protein resides in the mitochondrion membrane. The enzyme catalyses a 3beta-hydroxy-Delta(5)-steroid + NAD(+) = a 3-oxo-Delta(5)-steroid + NADH + H(+). The catalysed reaction is pregnenolone + NAD(+) = pregn-5-ene-3,20-dione + NADH + H(+). It catalyses the reaction 3beta-hydroxyandrost-5-en-17-one + NAD(+) = androst-5-ene-3,17-dione + NADH + H(+). It carries out the reaction androst-5-en-3beta,17beta-diol + NAD(+) = 17beta-hydroxy-androst-5-en-3-one + NADH + H(+). The enzyme catalyses a 3beta-hydroxysteroid + NADP(+) = a 3-oxosteroid + NADPH + H(+). The catalysed reaction is 5alpha-androstane-3beta,17beta-diol + NADP(+) = 17beta-hydroxy-5alpha-androstan-3-one + NADPH + H(+). It catalyses the reaction 3beta-hydroxy-5alpha-androstan-17-one + NADP(+) = 5alpha-androstan-3,17-dione + NADPH + H(+). It carries out the reaction a 3-oxo-Delta(5)-steroid = a 3-oxo-Delta(4)-steroid. The enzyme catalyses pregn-5-ene-3,20-dione = progesterone. The catalysed reaction is androst-5-ene-3,17-dione = androst-4-ene-3,17-dione. It catalyses the reaction 17beta-hydroxy-androst-5-en-3-one = testosterone. It carries out the reaction 5alpha-androstane-3beta,17beta-diol + NAD(+) = 17beta-hydroxy-5alpha-androstan-3-one + NADH + H(+). Its pathway is steroid hormone biosynthesis. The protein operates within steroid metabolism. In terms of biological role, a bifunctional enzyme responsible for the oxidation and isomerization of 3beta-hydroxy-Delta(5)-steroid precursors to 3-oxo-Delta(4)-steroids, an essential step in steroid hormone biosynthesis. Specifically catalyzes the conversion of pregnenolone to progesterone, dehydroepiandrosterone (DHEA) to 4-androstenedione, and androstenediol to testosterone. Additionally, catalyzes the interconversion between 3beta-hydroxy and 3-oxo-5alpha-androstane steroids controlling the bioavalability of the active forms. Specifically converts dihydrotestosterone to its inactive form 5alpha-androstanediol, that does not bind androgen receptor/AR. Also converts androstanedione, a precursor of testosterone and estrone, to epiandrosterone. Expected to use NAD(+) as preferred electron donor for the 3beta-hydroxy-steroid dehydrogenase activity and NADPH for the 3-ketosteroid reductase activity. The sequence is that of 3 beta-hydroxysteroid dehydrogenase/Delta 5--&gt;4-isomerase type 1 from Rattus norvegicus (Rat).